The chain runs to 834 residues: MGNYKSRPTQTCSDEWKKKVSESYAIIIERLEDDLQIKENEFQELRHIFGSDEAFSEVSLNYRTERGLSLLHLCCACGGNKSHIRALMLKGLRPSRLTRNGFPALHLAVYKDSLELITSLLHSGADVQQAGYGGLTALHIAAIAGHPEAVEVLLQHGANVNVQDAVFFTPLHIAAYYGHEQVTSVLLKFGADVNVSGEVGDRPLHLASAKGFFNIVKLLVEGNKADVNAQDNEDHVPLHFCSRFGHHNIVSYLLQSDLEVQPHVINIYGDTPLHLACYNGNFEVAKEIVHVTGTESLTKENIFSETAFHSACTYGKNIDLVKFLLDQNAVNINHRGRDGHTGLHSACYHGHIRLVQFLLDNGADMNLVACDPSRSSGEKDEQTCLMWAYEKGHDAIVTLLKHYKRPQDELPCNEYSQPGGDGSYVSVPSPLGKIKSMTKEKADVLLLRAELPSRFHLQLSEIEFHEIIGSGSFGKVYKGRCRNKIVAIKRYRANTYCSKSDVDMFCREVSILCQLNHPCVVQFVGACLDDPSQFAIVTQYISGGSLFSLLHEQKRILDLQSKLIIAVDVAKGMEYLHSLTQPIIHRDLNSHNILLYEDGHAVVADFGESRFLQSLDEDNMTKQPGNLRWMAPEVFTQCTRYTIKADVFSYALCLWELLTGEIPFAHLKPAAAAADMAYHHIRPPIGYSIPKPISSLLMRGWNACPEGRPEFSEVVRKLEECLCNVELMSPASSNSSGSLSPSSSSDCLLSRGGPGRSHVAALRSRFELEYALNARSYTGWPQSVGTHTNPGLSLEEMNRGAQYSAVDKYGYVSDPMSPMHLHSRRNSGSFEDGN.

G2 carries N-myristoyl glycine lipidation. A coiled-coil region spans residues 21-49; that stretch reads SESYAIIIERLEDDLQIKENEFQELRHIF. ANK repeat units follow at residues 66–96, 100–129, 133–162, 166–195, 199–229, 233–262, 268–297, 303–334, 338–367, and 380–409; these read RGLSLLHLCCACGGNKSHIRALMLKGLRPSR, NGFPALHLAVYKDSLELITSLLHSGADVQQ, GGLTALHIAAIAGHPEAVEVLLQHGANVNV, VFFTPLHIAAYYGHEQVTSVLLKFGADVNV, VGDRPLHLASAKGFFNIVKLLVEGNKADVNA, EDHVPLHFCSRFGHHNIVSYLLQSDLEVQP, YGDTPLHLACYNGNFEVAKEIVHVTGTESL, FSETAFHSACTYGKNIDLVKFLLDQNAVNINH, DGHTGLHSACYHGHIRLVQFLLDNGADMNL, and DEQTCLMWAYEKGHDAIVTLLKHYKRPQDE. The Protein kinase domain occupies 462 to 722; the sequence is IEFHEIIGSG…EVVRKLEECL (261 aa). ATP is bound by residues 468–476 and K489; that span reads IGSGSFGKV. D587 (proton acceptor) is an active-site residue. The interval 815-834 is disordered; sequence PMSPMHLHSRRNSGSFEDGN.

Belongs to the protein kinase superfamily. TKL Ser/Thr protein kinase family. MAP kinase kinase kinase subfamily. In terms of assembly, interacts with TNNI3, ACTC, ACTA1, MYBPC3, AIP, FABP3 and HADHB. It depends on Mg(2+) as a cofactor. Autophosphorylated.

The protein resides in the nucleus. It is found in the cytoplasm. The catalysed reaction is L-seryl-[protein] + ATP = O-phospho-L-seryl-[protein] + ADP + H(+). It carries out the reaction L-threonyl-[protein] + ATP = O-phospho-L-threonyl-[protein] + ADP + H(+). Its function is as follows. May play a role in cardiac physiology. This chain is Serine/threonine-protein kinase TNNI3K, found in Mus musculus (Mouse).